The following is a 633-amino-acid chain: Glutamyl-tRNA(Gln) amidotransferase subunit E (633 aa).

It belongs to the GatB/GatE family. GatE subfamily. In terms of assembly, heterodimer of GatD and GatE.

The catalysed reaction is L-glutamyl-tRNA(Gln) + L-glutamine + ATP + H2O = L-glutaminyl-tRNA(Gln) + L-glutamate + ADP + phosphate + H(+). Functionally, allows the formation of correctly charged Gln-tRNA(Gln) through the transamidation of misacylated Glu-tRNA(Gln) in organisms which lack glutaminyl-tRNA synthetase. The reaction takes place in the presence of glutamine and ATP through an activated gamma-phospho-Glu-tRNA(Gln). The GatDE system is specific for glutamate and does not act on aspartate. In Saccharolobus islandicus (strain L.S.2.15 / Lassen #1) (Sulfolobus islandicus), this protein is Glutamyl-tRNA(Gln) amidotransferase subunit E.